A 254-amino-acid polypeptide reads, in one-letter code: 3-deoxy-manno-octulosonate cytidylyltransferase (254 aa).

The protein belongs to the KdsB family.

The protein localises to the cytoplasm. It carries out the reaction 3-deoxy-alpha-D-manno-oct-2-ulosonate + CTP = CMP-3-deoxy-beta-D-manno-octulosonate + diphosphate. Its pathway is nucleotide-sugar biosynthesis; CMP-3-deoxy-D-manno-octulosonate biosynthesis; CMP-3-deoxy-D-manno-octulosonate from 3-deoxy-D-manno-octulosonate and CTP: step 1/1. The protein operates within bacterial outer membrane biogenesis; lipopolysaccharide biosynthesis. In terms of biological role, activates KDO (a required 8-carbon sugar) for incorporation into bacterial lipopolysaccharide in Gram-negative bacteria. In Geobacter metallireducens (strain ATCC 53774 / DSM 7210 / GS-15), this protein is 3-deoxy-manno-octulosonate cytidylyltransferase.